We begin with the raw amino-acid sequence, 150 residues long: 3-hydroxyacyl-[acyl-carrier-protein] dehydratase FabZ (150 aa).

The active site involves His54.

This sequence belongs to the thioester dehydratase family. FabZ subfamily.

It is found in the cytoplasm. The catalysed reaction is a (3R)-hydroxyacyl-[ACP] = a (2E)-enoyl-[ACP] + H2O. Its function is as follows. Involved in unsaturated fatty acids biosynthesis. Catalyzes the dehydration of short chain beta-hydroxyacyl-ACPs and long chain saturated and unsaturated beta-hydroxyacyl-ACPs. This is 3-hydroxyacyl-[acyl-carrier-protein] dehydratase FabZ from Vibrio campbellii (strain ATCC BAA-1116).